Here is a 273-residue protein sequence, read N- to C-terminus: Dermonecrotic toxin LdSicTox-alphaIB3b (273 aa).

Residue histidine 5 is part of the active site. Mg(2+) is bound by residues glutamate 25 and aspartate 27. Histidine 41 functions as the Nucleophile in the catalytic mechanism. 2 disulfide bridges follow: cysteine 45–cysteine 51 and cysteine 47–cysteine 190. A Mg(2+)-binding site is contributed by aspartate 85.

The protein belongs to the arthropod phospholipase D family. Class II subfamily. Requires Mg(2+) as cofactor. As to expression, expressed by the venom gland.

It is found in the secreted. The enzyme catalyses an N-(acyl)-sphingosylphosphocholine = an N-(acyl)-sphingosyl-1,3-cyclic phosphate + choline. The catalysed reaction is an N-(acyl)-sphingosylphosphoethanolamine = an N-(acyl)-sphingosyl-1,3-cyclic phosphate + ethanolamine. It catalyses the reaction a 1-acyl-sn-glycero-3-phosphocholine = a 1-acyl-sn-glycero-2,3-cyclic phosphate + choline. It carries out the reaction a 1-acyl-sn-glycero-3-phosphoethanolamine = a 1-acyl-sn-glycero-2,3-cyclic phosphate + ethanolamine. Functionally, dermonecrotic toxins cleave the phosphodiester linkage between the phosphate and headgroup of certain phospholipids (sphingolipid and lysolipid substrates), forming an alcohol (often choline) and a cyclic phosphate. This toxin acts on sphingomyelin (SM). It may also act on ceramide phosphoethanolamine (CPE), lysophosphatidylcholine (LPC) and lysophosphatidylethanolamine (LPE), but not on lysophosphatidylserine (LPS), and lysophosphatidylglycerol (LPG). It acts by transphosphatidylation, releasing exclusively cyclic phosphate products as second products. Induces dermonecrosis, hemolysis, increased vascular permeability, edema, inflammatory response, and platelet aggregation. In Loxosceles deserta (Desert recluse spider), this protein is Dermonecrotic toxin LdSicTox-alphaIB3b.